The sequence spans 359 residues: tRNA/tmRNA (uracil-C(5))-methyltransferase (359 aa).

Residues Q183, Y211, N216, E232, and D292 each contribute to the S-adenosyl-L-methionine site. C317 acts as the Nucleophile in catalysis. The active-site Proton acceptor is the E351.

It belongs to the class I-like SAM-binding methyltransferase superfamily. RNA M5U methyltransferase family. TrmA subfamily.

It carries out the reaction uridine(54) in tRNA + S-adenosyl-L-methionine = 5-methyluridine(54) in tRNA + S-adenosyl-L-homocysteine + H(+). The catalysed reaction is uridine(341) in tmRNA + S-adenosyl-L-methionine = 5-methyluridine(341) in tmRNA + S-adenosyl-L-homocysteine + H(+). Functionally, dual-specificity methyltransferase that catalyzes the formation of 5-methyluridine at position 54 (m5U54) in all tRNAs, and that of position 341 (m5U341) in tmRNA (transfer-mRNA). This is tRNA/tmRNA (uracil-C(5))-methyltransferase from Pseudomonas fluorescens (strain SBW25).